Consider the following 447-residue polypeptide: UPF0210 protein lhv_0606 (447 aa).

It belongs to the UPF0210 family. In terms of assembly, homodimer.

The polypeptide is UPF0210 protein lhv_0606 (Lactobacillus helveticus (strain DPC 4571)).